The following is a 320-amino-acid chain: MSKVMTLKDAIAKYVHSGDHIALGGFTTDRKPYAAVFEILRQGITDLTGLGGAAGGDWDMLIGNGRVKAYINCYTANSGVTNVSRRFRKWFEAGKLTMEDYSQDVIYMMWHAAALGLPFLPVTLMQGSGLTDEWGISKEVRKTLDKVPDDKFKYIDNPFKPGEKVVAVPVPQVDVAIIHAQQASPDGTVRIWGGKFQDVDIAEAAKYTIVTCEEIISDEEIRRDPTKNDIPGMCVDAVVLAPYGAHPSQCYGLYDYDNPFLKVYDKVSKTQEDFDAFCKEWVFDLKDHDEYLNKLGATRLINLKVVPGLGYHIDMTKEDK.

This sequence belongs to the 3-oxoacid CoA-transferase subunit A family. As to quaternary structure, heterooctamer of four A and four B subunits.

It is found in the cytoplasm. It catalyses the reaction trans-glutaconate + acetyl-CoA = (2E)-glutaconyl-CoA + acetate. Its pathway is amino-acid degradation; L-glutamate degradation via hydroxyglutarate pathway; crotonoyl-CoA from L-glutamate: step 3/5. Functionally, catalyzes the transfer of the CoA moiety from acetyl-CoA to (R)-2-hydroxyglutarate and related compounds like glutaconate. This Acidaminococcus fermentans (strain ATCC 25085 / DSM 20731 / CCUG 9996 / CIP 106432 / VR4) protein is Glutaconate CoA-transferase subunit A (gctA).